A 625-amino-acid chain; its full sequence is 1-deoxy-D-xylulose-5-phosphate synthase (625 aa).

Thiamine diphosphate contacts are provided by residues histidine 80 and 121–123 (GHS). Aspartate 152 provides a ligand contact to Mg(2+). Thiamine diphosphate is bound by residues 153–154 (GS), asparagine 181, tyrosine 290, and glutamate 371. A Mg(2+)-binding site is contributed by asparagine 181.

This sequence belongs to the transketolase family. DXPS subfamily. As to quaternary structure, homodimer. The cofactor is Mg(2+). Thiamine diphosphate is required as a cofactor.

The catalysed reaction is D-glyceraldehyde 3-phosphate + pyruvate + H(+) = 1-deoxy-D-xylulose 5-phosphate + CO2. Its pathway is metabolic intermediate biosynthesis; 1-deoxy-D-xylulose 5-phosphate biosynthesis; 1-deoxy-D-xylulose 5-phosphate from D-glyceraldehyde 3-phosphate and pyruvate: step 1/1. Functionally, catalyzes the acyloin condensation reaction between C atoms 2 and 3 of pyruvate and glyceraldehyde 3-phosphate to yield 1-deoxy-D-xylulose-5-phosphate (DXP). The protein is 1-deoxy-D-xylulose-5-phosphate synthase of Haemophilus influenzae (strain PittGG).